The chain runs to 155 residues: Small ribosomal subunit protein uS7c (155 aa).

It belongs to the universal ribosomal protein uS7 family. As to quaternary structure, part of the 30S ribosomal subunit.

Its subcellular location is the plastid. It is found in the chloroplast. In terms of biological role, one of the primary rRNA binding proteins, it binds directly to 16S rRNA where it nucleates assembly of the head domain of the 30S subunit. The polypeptide is Small ribosomal subunit protein uS7c (rps7) (Pinus koraiensis (Korean pine)).